A 172-amino-acid chain; its full sequence is Ribosome maturation factor RimM (172 aa).

Positions 95–168 (QEGEFYYHQI…CVDVELMEGL (74 aa)) constitute a PRC barrel domain.

This sequence belongs to the RimM family. In terms of assembly, binds ribosomal protein uS19.

Its subcellular location is the cytoplasm. Its function is as follows. An accessory protein needed during the final step in the assembly of 30S ribosomal subunit, possibly for assembly of the head region. Essential for efficient processing of 16S rRNA. May be needed both before and after RbfA during the maturation of 16S rRNA. It has affinity for free ribosomal 30S subunits but not for 70S ribosomes. This is Ribosome maturation factor RimM from Streptococcus pyogenes serotype M49 (strain NZ131).